A 467-amino-acid chain; its full sequence is Sialic acid-binding Ig-like lectin 7 (467 aa).

Positions 1 to 18 (MLLLLLLPLLWGRERVEG) are cleaved as a signal peptide. Residues 19–353 (QKSNRKDYSL…KMRPVSGVLL (335 aa)) lie on the Extracellular side of the membrane. One can recognise an Ig-like V-type domain in the interval 39–122 (GMCVHVRCSF…ARMSDAGRYF (84 aa)). The cysteines at positions 46 and 106 are disulfide-linked. N105 carries an N-linked (GlcNAc...) asparagine glycan. N-acetylneuraminate is bound by residues R124 and 131-135 (KWNYK). 2 N-linked (GlcNAc...) asparagine glycosylation sites follow: N142 and N165. The Ig-like C2-type 1 domain maps to 150-233 (PNILIPGTLE…AGVTTNRTIQ (84 aa)). A disulfide bond links C168 and C217. Residues N229, N235, N242, and N260 are each glycosylated (N-linked (GlcNAc...) asparagine). The region spanning 240-336 (PQNLTVTVFQ…GSQHVSLNLS (97 aa)) is the Ig-like C2-type 2 domain. Cysteines 276 and 320 form a disulfide. The N-linked (GlcNAc...) asparagine glycan is linked to N334. A helical transmembrane segment spans residues 354-376 (GAVGGAGATALVFLSFCVIFIVV). Topologically, residues 377-467 (RSCRKKSARP…NEYSEIKIPK (91 aa)) are cytoplasmic. Residues 401-412 (IRGSASQGNLTE) show a composition bias toward polar residues. Residues 401–431 (IRGSASQGNLTESWADDNPRHHGLAAHSSGE) form a disordered region. At S429 the chain carries Phosphoserine. The ITIM motif signature appears at 435-440 (IQYAPL). The tract at residues 443 to 467 (HKGEPQDLSGQEATNNEYSEIKIPK) is disordered. Residues 450–460 (LSGQEATNNEY) show a composition bias toward polar residues.

This sequence belongs to the immunoglobulin superfamily. SIGLEC (sialic acid binding Ig-like lectin) family. As to quaternary structure, interacts with PTPN6/SHP-1 upon phosphorylation. Post-translationally, tyrosine phosphorylated. Predominantly expressed by resting and activated natural killer cells and at lower levels by granulocytes and monocytes. High expression found in placenta, liver, lung, spleen, and peripheral blood leukocytes.

The protein resides in the membrane. In terms of biological role, putative adhesion molecule that mediates sialic-acid dependent binding to cells. Preferentially binds to alpha-2,3- and alpha-2,6-linked sialic acid. Also binds disialogangliosides (disialogalactosyl globoside, disialyl lactotetraosylceramide and disialyl GalNAc lactotetraoslylceramide). The sialic acid recognition site may be masked by cis interactions with sialic acids on the same cell surface. In the immune response, may act as an inhibitory receptor upon ligand induced tyrosine phosphorylation by recruiting cytoplasmic phosphatase(s) via their SH2 domain(s) that block signal transduction through dephosphorylation of signaling molecules. Mediates inhibition of natural killer cells cytotoxicity. May play a role in hemopoiesis. Inhibits differentiation of CD34+ cell precursors towards myelomonocytic cell lineage and proliferation of leukemic myeloid cells (in vitro). This chain is Sialic acid-binding Ig-like lectin 7 (SIGLEC7), found in Homo sapiens (Human).